Consider the following 151-residue polypeptide: D-aminoacyl-tRNA deacylase (151 aa).

Residues 137–138 carry the Gly-cisPro motif, important for rejection of L-amino acids motif; sequence GP.

Belongs to the DTD family. Homodimer.

The protein localises to the cytoplasm. The enzyme catalyses glycyl-tRNA(Ala) + H2O = tRNA(Ala) + glycine + H(+). The catalysed reaction is a D-aminoacyl-tRNA + H2O = a tRNA + a D-alpha-amino acid + H(+). In terms of biological role, an aminoacyl-tRNA editing enzyme that deacylates mischarged D-aminoacyl-tRNAs. Also deacylates mischarged glycyl-tRNA(Ala), protecting cells against glycine mischarging by AlaRS. Acts via tRNA-based rather than protein-based catalysis; rejects L-amino acids rather than detecting D-amino acids in the active site. By recycling D-aminoacyl-tRNA to D-amino acids and free tRNA molecules, this enzyme counteracts the toxicity associated with the formation of D-aminoacyl-tRNA entities in vivo and helps enforce protein L-homochirality. This chain is D-aminoacyl-tRNA deacylase, found in Geobacter metallireducens (strain ATCC 53774 / DSM 7210 / GS-15).